Consider the following 404-residue polypeptide: Sorting nexin-5 (404 aa).

A2 bears the N-acetylalanine mark. The region spanning 25 to 172 (LNVDPSLQID…HVFLEYDQDL (148 aa)) is the PX domain. A 1,2-diacyl-sn-glycero-3-phospho-(1D-myo-inositol-4,5-bisphosphate) is bound by residues 40-46 (SERDKVK), 99-105 (FDGPREK), and 113-116 (EGSM). Positions 169-261 (DQDLSVRRKN…HSLALEEPTV (93 aa)) are interaction with DOCK1. Residues 183–200 (FGGFFKSVVKSADEVLFT) are membrane-binding amphipathic helix. S193 carries the post-translational modification Phosphoserine. Positions 202 to 404 (VKEVDDFFEQ…QSCIDLFKNN (203 aa)) constitute a BAR domain. K275 is subject to N6-acetyllysine.

This sequence belongs to the sorting nexin family. As to quaternary structure, forms heterodimers with BAR domain-containing sorting nexins SNX1 and SNX2; does not homodimerize. The heterodimers are proposed to self-assemble into helical arrays on the membrane to stabilize and expand local membrane curvature underlying endosomal tubule formation. Thought to be a component of the originally described retromer complex (also called SNX-BAR retromer) which is a pentamer containing the heterotrimeric retromer cargo-selective complex (CSC), also described as vacuolar protein sorting subcomplex (VPS), and a heterodimeric membrane-deforming subcomplex formed between SNX1 or SNX2 and SNX5 or SNX6 (also called SNX-BAR subcomplex); the respective CSC and SNX-BAR subcomplexes associate with low affinity. Interacts with SNX1, SNX2, VPS26A, VPS29, VPS35, DCTN1, DOCK1, MIB1, PIP5K1C isoform 3. Interacts with HGS; increased by PIP5K1C isoform 3 kinase activity and by PtdIns(3P) and/or PtdIns(3,4)P2. In terms of assembly, (Microbial infection) Interacts with human cytomegalovirus proteins UL35 and UL35A; these interactions inhibit the ability of USP7 to form nuclear bodies.

It localises to the endosome. The protein resides in the early endosome. Its subcellular location is the early endosome membrane. It is found in the cell membrane. The protein localises to the cytoplasmic vesicle membrane. It localises to the cytoplasm. The protein resides in the cell projection. Its subcellular location is the phagocytic cup. It is found in the ruffle. Involved in several stages of intracellular trafficking. Interacts with membranes containing phosphatidylinositol 3-phosphate (PtdIns(3P)) or phosphatidylinositol 3,4-bisphosphate (PtdIns(3,4)P2). Acts in part as component of the retromer membrane-deforming SNX-BAR subcomplex. The SNX-BAR retromer mediates retrograde transport of cargo proteins from endosomes to the trans-Golgi network (TGN) and is involved in endosome-to-plasma membrane transport for cargo protein recycling. The SNX-BAR subcomplex functions to deform the donor membrane into a tubular profile called endosome-to-TGN transport carrier (ETC). Does not have in vitro vesicle-to-membrane remodeling activity. Involved in retrograde transport of lysosomal enzyme receptor IGF2R. May function as link between endosomal transport vesicles and dynactin. Plays a role in the internalization of EGFR after EGF stimulation. Involved in EGFR endosomal sorting and degradation; the function involves PIP5K1C isoform 3 and is retromer-independent. Together with PIP5K1C isoform 3 facilitates HGS interaction with ubiquitinated EGFR, which initiates EGFR sorting to intraluminal vesicles (ILVs) of the multivesicular body for subsequent lysosomal degradation. Involved in E-cadherin sorting and degradation; inhibits PIP5K1C isoform 3-mediated E-cadherin degradation. Plays a role in macropinocytosis. This is Sorting nexin-5 (SNX5) from Homo sapiens (Human).